Consider the following 685-residue polypeptide: tRNA-dihydrouridine(47) synthase [NAD(P)(+)]-like (685 aa).

Over residues 1–12 (MAATAAAAAAAP) the composition is skewed to low complexity. 3 disordered regions span residues 1–91 (MAAT…SSSH), 209–234 (AAND…PLCN), and 257–314 (LIDN…SCRT). The segment covering 13 to 29 (PADPPDSSPAASSPPRP) has biased composition (pro residues). A C3H1-type zinc finger spans residues 87–118 (KSSSHLCIEVGKSGNVSSCKYGDSCRFSHDID). 2 stretches are compositionally biased toward basic and acidic residues: residues 209 to 221 (AAND…HDNL) and 273 to 284 (SKVESDEIDKHG). Residues 287–314 (TLNTNTESEDPNLSNGLEPSNNSSSCRT) are compositionally biased toward polar residues. Residues 338–340 (PLT) and glutamine 392 each bind FMN. Cysteine 423 (proton donor) is an active-site residue. FMN-binding positions include lysine 462, histidine 492, 525–527 (NGD), and 550–551 (AR).

The protein belongs to the Dus family. Dus3 subfamily. FMN serves as cofactor.

It carries out the reaction 5,6-dihydrouridine(47) in tRNA + NAD(+) = uridine(47) in tRNA + NADH + H(+). The catalysed reaction is 5,6-dihydrouridine(47) in tRNA + NADP(+) = uridine(47) in tRNA + NADPH + H(+). The enzyme catalyses a 5,6-dihydrouridine in mRNA + NAD(+) = a uridine in mRNA + NADH + H(+). It catalyses the reaction a 5,6-dihydrouridine in mRNA + NADP(+) = a uridine in mRNA + NADPH + H(+). In terms of biological role, catalyzes the synthesis of dihydrouridine, a modified base found in the D-loop of most tRNAs. Specifically modifies U47 in cytoplasmic tRNAs. Catalyzes the synthesis of dihydrouridine in some mRNAs, thereby affecting their translation. The protein is tRNA-dihydrouridine(47) synthase [NAD(P)(+)]-like of Oryza sativa subsp. japonica (Rice).